The chain runs to 415 residues: Gamma-glutamyl phosphate reductase (415 aa).

This sequence belongs to the gamma-glutamyl phosphate reductase family.

It localises to the cytoplasm. It catalyses the reaction L-glutamate 5-semialdehyde + phosphate + NADP(+) = L-glutamyl 5-phosphate + NADPH + H(+). It participates in amino-acid biosynthesis; L-proline biosynthesis; L-glutamate 5-semialdehyde from L-glutamate: step 2/2. Functionally, catalyzes the NADPH-dependent reduction of L-glutamate 5-phosphate into L-glutamate 5-semialdehyde and phosphate. The product spontaneously undergoes cyclization to form 1-pyrroline-5-carboxylate. This chain is Gamma-glutamyl phosphate reductase, found in Clostridium perfringens (strain ATCC 13124 / DSM 756 / JCM 1290 / NCIMB 6125 / NCTC 8237 / Type A).